Here is a 119-residue protein sequence, read N- to C-terminus: Hisactophilin-3 (119 aa).

Glycine 2 carries the N-myristoyl glycine lipid modification. Residues 8-110 form a contains several HHXH repeats region; the sequence is SHHGHFLSAE…SIYTTHHHHH (103 aa). 2 consecutive repeat copies span residues 34–47 and 75–87. The segment at 34 to 87 is 2 X 13 AA approximate repeats; it reads FHVENHGHHKVAIRTHANKYVSINDNNDVYISHHFHGEHSLFHLEHHGGKVSIK.

The protein belongs to the hisactophilin family. Post-translationally, phosphorylated.

Its subcellular location is the cytoplasm. It is found in the cell membrane. Functionally, may act as an intracellular pH sensor that links chemotactic signals to responses in the microfilament system of the cells by nucleating actin polymerization or stabilizing the filaments. This is Hisactophilin-3 (hatC) from Dictyostelium discoideum (Social amoeba).